The primary structure comprises 521 residues: Zinc finger CCCH domain-containing protein 45 (521 aa).

Disordered regions lie at residues 28-60, 142-185, and 296-319; these read TEDSPANVASQPQRHSYPSRKPRGPDLPPGFEG, TPAI…PLCS, and SRSFTNPERRVSPPKPVNGSISPP. Residues 34–43 show a composition bias toward polar residues; the sequence is NVASQPQRHS. A compositionally biased stretch (low complexity) spans 159 to 168; it reads EESSNSKVES. The segment covering 170-185 has biased composition (polar residues); it reads VTANKQGQLETKPLCS. A C3H1-type zinc finger spans residues 469 to 497; the sequence is NKIHQQCIYFGTANGCNMGDSCTYVHDRY.

The chain is Zinc finger CCCH domain-containing protein 45 from Arabidopsis thaliana (Mouse-ear cress).